Reading from the N-terminus, the 398-residue chain is Argininosuccinate synthase (398 aa).

Alanine 8–serine 16 contributes to the ATP binding site. An L-citrulline-binding site is contributed by tyrosine 87. Glycine 117 contacts ATP. Residues threonine 119, asparagine 123, and aspartate 124 each coordinate L-aspartate. Asparagine 123 is a binding site for L-citrulline. L-citrulline is bound by residues arginine 127, serine 175, glutamate 259, and tyrosine 271.

The protein belongs to the argininosuccinate synthase family. Type 1 subfamily. As to quaternary structure, homotetramer.

It is found in the cytoplasm. It catalyses the reaction L-citrulline + L-aspartate + ATP = 2-(N(omega)-L-arginino)succinate + AMP + diphosphate + H(+). It functions in the pathway amino-acid biosynthesis; L-arginine biosynthesis; L-arginine from L-ornithine and carbamoyl phosphate: step 2/3. This is Argininosuccinate synthase from Corynebacterium kroppenstedtii (strain DSM 44385 / JCM 11950 / CIP 105744 / CCUG 35717).